A 297-amino-acid polypeptide reads, in one-letter code: Probable oxidoreductase (297 aa).

9–33 lines the NAD(+) pocket; it reads VVTGGASGLGAETVRALAAAGAEVT. Ser-138 contacts substrate. Residue Tyr-164 is the Proton acceptor of the active site.

This sequence belongs to the short-chain dehydrogenases/reductases (SDR) family.

The chain is Probable oxidoreductase from Streptomyces lividans.